The primary structure comprises 358 residues: 3-dehydroquinate synthase (358 aa).

NAD(+)-binding positions include 105 to 109 (GVVGD), 129 to 130 (TT), Lys-142, Lys-151, and 169 to 172 (TLKT). Residues Glu-184, His-245, and His-262 each contribute to the Zn(2+) site.

The protein belongs to the sugar phosphate cyclases superfamily. Dehydroquinate synthase family. NAD(+) serves as cofactor. The cofactor is Co(2+). Zn(2+) is required as a cofactor.

It is found in the cytoplasm. The catalysed reaction is 7-phospho-2-dehydro-3-deoxy-D-arabino-heptonate = 3-dehydroquinate + phosphate. Its pathway is metabolic intermediate biosynthesis; chorismate biosynthesis; chorismate from D-erythrose 4-phosphate and phosphoenolpyruvate: step 2/7. In terms of biological role, catalyzes the conversion of 3-deoxy-D-arabino-heptulosonate 7-phosphate (DAHP) to dehydroquinate (DHQ). The sequence is that of 3-dehydroquinate synthase from Enterococcus faecalis (strain ATCC 47077 / OG1RF).